The sequence spans 333 residues: Nucleoid-associated protein APL_0429 (333 aa).

Belongs to the YejK family.

The protein resides in the cytoplasm. The protein localises to the nucleoid. The sequence is that of Nucleoid-associated protein APL_0429 from Actinobacillus pleuropneumoniae serotype 5b (strain L20).